The following is a 197-amino-acid chain: MRWIGVLVTALVLSACAANPPANTTSPTAGQSLDCTKPATIVQQLVCHDRQLTSLDHRLSTAYQQALAHRRSAALEAAQSSWTMLRDACAQDTDPRTCVQEAYQTRLVQLAIADPATATPPVLTYRCPTQDGPLTAQFYNQFDPKTAVLNWKGDQVIVFVELSGSGARYGRQGIEYWEHQGEVRLDFHGATFVCRTS.

Positions 1-15 are cleaved as a signal peptide; it reads MRWIGVLVTALVLSA. Residue Cys16 is the site of N-palmitoyl cysteine attachment. Cys16 carries S-diacylglycerol cysteine lipidation.

This sequence in the C-terminal section; belongs to the MliC family. As to quaternary structure, probably a homodimer. Post-translationally, glycosylated.

The protein localises to the cell membrane. The protein resides in the secreted. It localises to the cell wall. Its subcellular location is the cell surface. Strongly binds and inhibits lysozyme, may help bacteria survive in lysozyme-producing host cells such as monocyte-derived macrophages. The sequence is that of Lipoprotein LprI (lprI) from Mycobacterium bovis (strain ATCC BAA-935 / AF2122/97).